The chain runs to 502 residues: ATP synthase subunit alpha (502 aa).

ATP is bound at residue 169 to 176; sequence GDRQTGKT.

The protein belongs to the ATPase alpha/beta chains family. In terms of assembly, F-type ATPases have 2 components, CF(1) - the catalytic core - and CF(0) - the membrane proton channel. CF(1) has five subunits: alpha(3), beta(3), gamma(1), delta(1), epsilon(1). CF(0) has three main subunits: a(1), b(2) and c(9-12). The alpha and beta chains form an alternating ring which encloses part of the gamma chain. CF(1) is attached to CF(0) by a central stalk formed by the gamma and epsilon chains, while a peripheral stalk is formed by the delta and b chains.

It localises to the cell membrane. The catalysed reaction is ATP + H2O + 4 H(+)(in) = ADP + phosphate + 5 H(+)(out). Its function is as follows. Produces ATP from ADP in the presence of a proton gradient across the membrane. The alpha chain is a regulatory subunit. The protein is ATP synthase subunit alpha of Priestia megaterium (strain ATCC 12872 / QMB1551) (Bacillus megaterium).